Reading from the N-terminus, the 951-residue chain is Exportin-2 (951 aa).

The region spanning 29–104 is the Importin N-terminal domain; that stretch reads ATSKIQKFVK…KSLLLNFILS (76 aa).

It belongs to the XPO2/CSE1 family.

The protein localises to the cytoplasm. Its subcellular location is the nucleus. In terms of biological role, export receptor for importin alpha. Mediates importin-alpha re-export from the nucleus to the cytoplasm after import substrates have been released into the nucleoplasm. The chain is Exportin-2 (xpo2) from Dictyostelium discoideum (Social amoeba).